A 511-amino-acid polypeptide reads, in one-letter code: 2,3-bisphosphoglycerate-independent phosphoglycerate mutase (511 aa).

Positions 18 and 68 each coordinate Mn(2+). S68 acts as the Phosphoserine intermediate in catalysis. Substrate-binding positions include H129, 159-160 (RD), R191, K197, 261-264 (RSDR), and K329. Positions 396, 400, 437, 438, and 459 each coordinate Mn(2+). Residues 442–464 (ERMTKQAPDGSVRPYGGHTTNPV) form a disordered region.

Belongs to the BPG-independent phosphoglycerate mutase family. Monomer. Mn(2+) is required as a cofactor.

The catalysed reaction is (2R)-2-phosphoglycerate = (2R)-3-phosphoglycerate. The protein operates within carbohydrate degradation; glycolysis; pyruvate from D-glyceraldehyde 3-phosphate: step 3/5. In terms of biological role, catalyzes the interconversion of 2-phosphoglycerate and 3-phosphoglycerate. The protein is 2,3-bisphosphoglycerate-independent phosphoglycerate mutase of Streptomyces coelicolor (strain ATCC BAA-471 / A3(2) / M145).